We begin with the raw amino-acid sequence, 417 residues long: Putative transporter AmpG 1 (417 aa).

Helical transmembrane passes span 7-27 (LCII…TGNT), 42-62 (IGIL…APIF), 78-98 (LSWI…FSFL), 104-124 (LLLF…QDTI), 143-163 (GIYI…AIYL), 171-191 (EIYK…IVGI), 225-245 (ALKP…LVLY), 273-293 (VGKF…GVIM), 301-321 (SIFL…FLEI), 328-348 (LLFI…TAYI), 366-386 (FLSS…GYMV), and 389-409 (FGWQ…LLIL).

This sequence belongs to the major facilitator superfamily.

It is found in the cell inner membrane. This is Putative transporter AmpG 1 (ampG1) from Rickettsia conorii (strain ATCC VR-613 / Malish 7).